We begin with the raw amino-acid sequence, 194 residues long: MARVGELERKTGETFVRVRLEVDGEGRADVSTGVGFLDHLLHLLAHHSGMDLEVRAEGDTWVDDHHTVEDTGLVLGRALDQALGDRSDLVRFADASVPLIEALSTAAVDLGGRSHLTCNTGPLPEKIGTFDTELFPEFLRAFTQYGRFTLHLNCHYGHNAHHKVESGVKALAVALRAAVSRRSSGTASTKGVVD.

Belongs to the imidazoleglycerol-phosphate dehydratase family.

It is found in the cytoplasm. It carries out the reaction D-erythro-1-(imidazol-4-yl)glycerol 3-phosphate = 3-(imidazol-4-yl)-2-oxopropyl phosphate + H2O. The protein operates within amino-acid biosynthesis; L-histidine biosynthesis; L-histidine from 5-phospho-alpha-D-ribose 1-diphosphate: step 6/9. This chain is Imidazoleglycerol-phosphate dehydratase, found in Rubrobacter xylanophilus (strain DSM 9941 / JCM 11954 / NBRC 16129 / PRD-1).